The following is a 184-amino-acid chain: uncharacterized protein (184 aa).

The interval 146–177 (HPKTSLAQQPNAKATQPPLSKETLNTAKETDP) is disordered. Positions 150–172 (SLAQQPNAKATQPPLSKETLNTA) are enriched in polar residues.

This is an uncharacterized protein from Picosynechococcus sp. (strain ATCC 27264 / PCC 7002 / PR-6) (Agmenellum quadruplicatum).